The chain runs to 314 residues: Peroxidase 2 (314 aa).

A signal peptide spans Met-1–Ala-23. At Gln-24 the chain carries Pyrrolidone carboxylic acid. 4 disulfide bridges follow: Cys-34/Cys-109, Cys-67/Cys-72, Cys-115/Cys-310, and Cys-194/Cys-219. His-65 functions as the Proton acceptor in the catalytic mechanism. 5 residues coordinate Ca(2+): Asp-66, Val-69, Gly-71, Asp-73, and Ser-75. Asn-148 carries N-linked (GlcNAc...) asparagine glycosylation. Residue Pro-157 coordinates substrate. Asn-169 carries an N-linked (GlcNAc...) asparagine glycan. His-187 lines the heme b pocket. Thr-188 contributes to the Ca(2+) binding site. Asn-203 carries N-linked (GlcNAc...) asparagine glycosylation. Ca(2+) contacts are provided by Asp-234, Thr-237, and Asp-242. N-linked (GlcNAc...) asparagine glycosylation is found at Asn-274 and Asn-309.

Belongs to the peroxidase family. Classical plant (class III) peroxidase subfamily. Ca(2+) is required as a cofactor. The cofactor is heme b.

The protein resides in the secreted. It carries out the reaction 2 a phenolic donor + H2O2 = 2 a phenolic radical donor + 2 H2O. In terms of biological role, removal of H(2)O(2), oxidation of toxic reductants, biosynthesis and degradation of lignin, suberization, auxin catabolism, response to environmental stresses such as wounding, pathogen attack and oxidative stress. These functions might be dependent on each isozyme/isoform in each plant tissue. The chain is Peroxidase 2 (PRX112) from Oryza sativa subsp. indica (Rice).